Consider the following 459-residue polypeptide: Chromosomal replication initiator protein DnaA (459 aa).

The tract at residues 1-90 (MAVSLWQQCI…RPASKPAAPA (90 aa)) is domain I, interacts with DnaA modulators. Residues 75-124 (RFDIGSRPASKPAAPAASTKSPVAPAAKSPSKPSFNSNEPAATANHRSNM) form a disordered region. A compositionally biased stretch (low complexity) spans 80 to 108 (SRPASKPAAPAASTKSPVAPAAKSPSKPS). Positions 91–122 (ASTKSPVAPAAKSPSKPSFNSNEPAATANHRS) are domain II. The segment covering 109–124 (FNSNEPAATANHRSNM) has biased composition (polar residues). The interval 123–339 (NMNPTYQFDN…GALNRVIANA (217 aa)) is domain III, AAA+ region. ATP contacts are provided by G167, G169, K170, and T171. A domain IV, binds dsDNA region spans residues 340 to 459 (NFTGRPITID…YANLIRTLSS (120 aa)).

The protein belongs to the DnaA family. Oligomerizes as a right-handed, spiral filament on DNA at oriC.

It is found in the cytoplasm. Plays an essential role in the initiation and regulation of chromosomal replication. ATP-DnaA binds to the origin of replication (oriC) to initiate formation of the DNA replication initiation complex once per cell cycle. Binds the DnaA box (a 9 base pair repeat at the origin) and separates the double-stranded (ds)DNA. Forms a right-handed helical filament on oriC DNA; dsDNA binds to the exterior of the filament while single-stranded (ss)DNA is stabiized in the filament's interior. The ATP-DnaA-oriC complex binds and stabilizes one strand of the AT-rich DNA unwinding element (DUE), permitting loading of DNA polymerase. After initiation quickly degrades to an ADP-DnaA complex that is not apt for DNA replication. Binds acidic phospholipids. This Shewanella loihica (strain ATCC BAA-1088 / PV-4) protein is Chromosomal replication initiator protein DnaA.